The following is a 369-amino-acid chain: Trichocyst matrix protein T1-B (369 aa).

The signal sequence occupies residues 1–16 (MYKLAVCTLLILSVTA). A propeptide spanning residues 17–55 (IDVTNSVWTSHDQKAFAQIKQSGWGNFILNFGELHLQTG) is cleaved from the precursor. A coiled-coil region spans residues 56-180 (GILAELNTEI…AIDESLQLLS (125 aa)). A propeptide spanning residues 190 to 225 (IQKVQKNLTKIQQSLKRHSTFQTFIKTLLEIAVEAN) is cleaved from the precursor. Positions 262-354 (KDFEARVIQL…AHQALDLLNQ (93 aa)) form a coiled coil.

It belongs to the TMP family. Post-translationally, two components are produced by post-translational processing from the precursor peptide.

Its subcellular location is the trichocyst. Structural protein that crystallize inside the trichocyst matrix. The chain is Trichocyst matrix protein T1-B (T1B) from Paramecium tetraurelia.